Here is a 345-residue protein sequence, read N- to C-terminus: Platelet-derived growth factor C (345 aa).

The first 22 residues, Met1–Ala22, serve as a signal peptide directing secretion. N-linked (GlcNAc...) asparagine glycosylation is found at Asn25 and Asn55. In terms of domain architecture, CUB spans His46–Leu163. 4 cysteine pairs are disulfide-bonded: Cys104-Cys124, Cys250-Cys294, Cys280-Cys335, and Cys287-Cys337.

It belongs to the PDGF/VEGF growth factor family. In terms of assembly, homodimer; disulfide-linked. Interacts with PDGFRA homodimers, and with heterodimers formed by PDGFRA and PDGFRB. In terms of processing, proteolytic removal of the N-terminal CUB domain releasing the core domain is necessary for unmasking the receptor-binding epitopes of the core domain. Cleavage after basic residues in the hinge region (region connecting the CUB and growth factor domains) gives rise to the receptor-binding form.

The protein resides in the secreted. Its function is as follows. Growth factor that plays an essential role in the regulation of embryonic development, cell proliferation, cell migration, survival and chemotaxis. Potent mitogen and chemoattractant for cells of mesenchymal origin. Required for normal skeleton formation during embryonic development. Required for normal skin morphogenesis during embryonic development. Plays an important role in wound healing, in angiogenesis and blood vessel development. The protein is Platelet-derived growth factor C (PDGFC) of Gekko japonicus (Schlegel's Japanese gecko).